We begin with the raw amino-acid sequence, 453 residues long: Maltotriose-binding protein (453 aa).

A signal peptide spans 1 to 29 (MKRGIYAVLLVGVLIFSVVASGCIGGTQT). Over residues 27–65 (TQTQTETQTPEKTQTPTTTQPSPTTTTSPTQTTSQTPTE) the composition is skewed to low complexity. The segment at 27–73 (TQTQTETQTPEKTQTPTTTQPSPTTTTSPTQTTSQTPTETETHTQEA) is disordered.

Belongs to the bacterial solute-binding protein 1 family.

In terms of biological role, involved in an abc transport system for maltotriose. The sequence is that of Maltotriose-binding protein (malE) from Pyrococcus abyssi (strain GE5 / Orsay).